The sequence spans 194 residues: Fibroblast growth factor 7 (194 aa).

The first 31 residues, 1-31, serve as a signal peptide directing secretion; the sequence is MRKWILTWILPSLLYRSCFHIICLVGTISLA. The N-linked (GlcNAc...) asparagine glycan is linked to N45.

The protein belongs to the heparin-binding growth factors family. In terms of assembly, interacts with FGFBP1. Interacts with FGFR2. Affinity between fibroblast growth factors (FGFs) and their receptors is increased by heparan sulfate glycosaminoglycans that function as coreceptors.

In terms of biological role, plays an important role in the regulation of embryonic development, cell proliferation and cell differentiation. Required for normal branching morphogenesis. Growth factor active on keratinocytes. Possible major paracrine effector of normal epithelial cell proliferation. The sequence is that of Fibroblast growth factor 7 (FGF7) from Ovis aries (Sheep).